The following is a 144-amino-acid chain: Pleckstrin homology-like domain family A member 2 (144 aa).

Residues 18 to 111 (ILCEGELEKR…AAITMALIDF (94 aa)) form the PH domain. A Phosphoserine modification is found at Ser-140.

Belongs to the PHLDA2 family. In terms of tissue distribution, specifically expressed at high levels in extraembryonic tissues in the developing conceptus (at protein level). Expressed in placenta and yolc sac. Expressed at low levels in fetal liver and kidney.

Its subcellular location is the cytoplasm. It localises to the membrane. Plays a role in regulating placenta growth. May act via its PH domain that competes with other PH domain-containing proteins, thereby preventing their binding to membrane lipids. The chain is Pleckstrin homology-like domain family A member 2 (Phlda2) from Mus musculus (Mouse).